The chain runs to 64 residues: Conotoxin Im11.1 (64 aa).

A signal peptide spans 1–26; sequence MMFRLTSVSCFLLVIACLNLVVLTNA. 4 disulfides stabilise this stretch: Cys27–Cys41, Cys34–Cys46, Cys40–Cys50, and Cys45–Cys54. Asn57 carries the post-translational modification Asparagine amide. A propeptide spanning residues 61-64 is cleaved from the precursor; sequence ATFQ.

It belongs to the conotoxin I2 superfamily. In terms of tissue distribution, expressed by the venom duct.

Its subcellular location is the secreted. The protein is Conotoxin Im11.1 of Conus imperialis (Imperial cone).